We begin with the raw amino-acid sequence, 493 residues long: Cobyric acid synthase (493 aa).

Residues 246–440 (PIDIAVIKMP…IHGVFDGVVF (195 aa)) form the GATase cobBQ-type domain. The active-site Nucleophile is Cys-326. His-432 is an active-site residue.

Belongs to the CobB/CobQ family. CobQ subfamily.

It participates in cofactor biosynthesis; adenosylcobalamin biosynthesis. Functionally, catalyzes amidations at positions B, D, E, and G on adenosylcobyrinic A,C-diamide. NH(2) groups are provided by glutamine, and one molecule of ATP is hydrogenolyzed for each amidation. The chain is Cobyric acid synthase from Clostridium botulinum (strain Okra / Type B1).